The primary structure comprises 118 residues: Large ribosomal subunit protein bL20 (118 aa).

It belongs to the bacterial ribosomal protein bL20 family.

Binds directly to 23S ribosomal RNA and is necessary for the in vitro assembly process of the 50S ribosomal subunit. It is not involved in the protein synthesizing functions of that subunit. The sequence is that of Large ribosomal subunit protein bL20 from Aeromonas hydrophila subsp. hydrophila (strain ATCC 7966 / DSM 30187 / BCRC 13018 / CCUG 14551 / JCM 1027 / KCTC 2358 / NCIMB 9240 / NCTC 8049).